A 291-amino-acid polypeptide reads, in one-letter code: Methionine aminopeptidase (291 aa).

H65 contributes to the substrate binding site. The a divalent metal cation site is built by D85, D96, and H155. H163 contacts substrate. The a divalent metal cation site is built by E188 and E276.

This sequence belongs to the peptidase M24A family. Methionine aminopeptidase archaeal type 2 subfamily. As to quaternary structure, monomer. It depends on Co(2+) as a cofactor. Zn(2+) is required as a cofactor. Mn(2+) serves as cofactor. Requires Fe(2+) as cofactor.

The catalysed reaction is Release of N-terminal amino acids, preferentially methionine, from peptides and arylamides.. Functionally, removes the N-terminal methionine from nascent proteins. The N-terminal methionine is often cleaved when the second residue in the primary sequence is small and uncharged (Met-Ala-, Cys, Gly, Pro, Ser, Thr, or Val). In Archaeoglobus fulgidus (strain ATCC 49558 / DSM 4304 / JCM 9628 / NBRC 100126 / VC-16), this protein is Methionine aminopeptidase.